We begin with the raw amino-acid sequence, 231 residues long: ATP phosphoribosyltransferase (231 aa).

The protein belongs to the ATP phosphoribosyltransferase family. Short subfamily. In terms of assembly, heteromultimer composed of HisG and HisZ subunits.

The protein localises to the cytoplasm. The enzyme catalyses 1-(5-phospho-beta-D-ribosyl)-ATP + diphosphate = 5-phospho-alpha-D-ribose 1-diphosphate + ATP. The protein operates within amino-acid biosynthesis; L-histidine biosynthesis; L-histidine from 5-phospho-alpha-D-ribose 1-diphosphate: step 1/9. Its function is as follows. Catalyzes the condensation of ATP and 5-phosphoribose 1-diphosphate to form N'-(5'-phosphoribosyl)-ATP (PR-ATP). Has a crucial role in the pathway because the rate of histidine biosynthesis seems to be controlled primarily by regulation of HisG enzymatic activity. The chain is ATP phosphoribosyltransferase from Sinorhizobium medicae (strain WSM419) (Ensifer medicae).